We begin with the raw amino-acid sequence, 644 residues long: DNA gyrase subunit B (644 aa).

Residues Cys429–Pro543 form the Toprim domain. Residues Glu435, Asp508, and Asp510 each contribute to the Mg(2+) site.

The protein belongs to the type II topoisomerase GyrB family. As to quaternary structure, heterotetramer, composed of two GyrA and two GyrB chains. In the heterotetramer, GyrA contains the active site tyrosine that forms a transient covalent intermediate with DNA, while GyrB binds cofactors and catalyzes ATP hydrolysis. Requires Mg(2+) as cofactor. Mn(2+) is required as a cofactor. It depends on Ca(2+) as a cofactor.

Its subcellular location is the cytoplasm. It carries out the reaction ATP-dependent breakage, passage and rejoining of double-stranded DNA.. In terms of biological role, a type II topoisomerase that negatively supercoils closed circular double-stranded (ds) DNA in an ATP-dependent manner to modulate DNA topology and maintain chromosomes in an underwound state. Negative supercoiling favors strand separation, and DNA replication, transcription, recombination and repair, all of which involve strand separation. Also able to catalyze the interconversion of other topological isomers of dsDNA rings, including catenanes and knotted rings. Type II topoisomerases break and join 2 DNA strands simultaneously in an ATP-dependent manner. The chain is DNA gyrase subunit B from Staphylococcus aureus (strain USA300).